A 149-amino-acid polypeptide reads, in one-letter code: Large ribosomal subunit protein bL9 (149 aa).

This sequence belongs to the bacterial ribosomal protein bL9 family.

Its function is as follows. Binds to the 23S rRNA. The chain is Large ribosomal subunit protein bL9 from Thiobacillus denitrificans (strain ATCC 25259 / T1).